Consider the following 453-residue polypeptide: Allantoinase (453 aa).

Zn(2+) contacts are provided by H59, H61, K146, H186, H242, and D315. Position 146 is an N6-carboxylysine (K146).

The protein belongs to the metallo-dependent hydrolases superfamily. Allantoinase family. In terms of assembly, homotetramer. Requires Zn(2+) as cofactor. Post-translationally, carboxylation allows a single lysine to coordinate two zinc ions.

It catalyses the reaction (S)-allantoin + H2O = allantoate + H(+). It functions in the pathway nitrogen metabolism; (S)-allantoin degradation; allantoate from (S)-allantoin: step 1/1. Its function is as follows. Catalyzes the conversion of allantoin (5-ureidohydantoin) to allantoic acid by hydrolytic cleavage of the five-member hydantoin ring. The chain is Allantoinase from Salmonella gallinarum (strain 287/91 / NCTC 13346).